The following is an 81-amino-acid chain: Putative defensin-like protein 56 (81 aa).

Positions 1 to 23 (MNITKAYVIFFLVVILTNSLSNS) are cleaved as a signal peptide. 4 disulfides stabilise this stretch: C46-C80, C50-C73, C59-C78, and C63-C79.

It belongs to the DEFL family.

It localises to the secreted. This Arabidopsis thaliana (Mouse-ear cress) protein is Putative defensin-like protein 56.